A 576-amino-acid chain; its full sequence is Arginine--tRNA ligase (576 aa).

The 'HIGH' region motif lies at 122–132; sequence PNVAKEMHVGH.

The protein belongs to the class-I aminoacyl-tRNA synthetase family. As to quaternary structure, monomer.

The protein localises to the cytoplasm. The enzyme catalyses tRNA(Arg) + L-arginine + ATP = L-arginyl-tRNA(Arg) + AMP + diphosphate. In Pectobacterium carotovorum subsp. carotovorum (strain PC1), this protein is Arginine--tRNA ligase.